The chain runs to 126 residues: C-type natriuretic peptide (126 aa).

The first 23 residues, 1–23 (MHLSQLLACALLLTLLSLRPSEA), serve as a signal peptide directing secretion. Residues 20–71 (PSEAKPGAPPKVPRTPPAEELAEPQAAGGGQKKGDKAPGGGGANLKGDRSRL) are disordered. Positions 24 to 73 (KPGAPPKVPRTPPAEELAEPQAAGGGQKKGDKAPGGGGANLKGDRSRLLR) are excised as a propeptide. Residues 26-35 (GAPPKVPRTP) are compositionally biased toward pro residues. Residues 46–63 (AGGGQKKGDKAPGGGGAN) are compositionally biased toward gly residues. Cys110 and Cys126 are joined by a disulfide.

It belongs to the natriuretic peptide family. Post-translationally, degraded by IDE (in vitro). In the kidney, predominantly expressed in the distal tubular cells (at protein level).

It localises to the secreted. Functionally, hormone which plays a role in endochondral ossification through regulation of cartilaginous growth plate chondrocytes proliferation and differentiation. May also be vasoactive and natriuretic. Acts by specifically binding and stimulating NPR2 to produce cGMP. Binds the clearance receptor NPR3. The protein is C-type natriuretic peptide (NPPC) of Homo sapiens (Human).